The sequence spans 422 residues: Tyrosine--tRNA ligase (422 aa).

Tyrosine 35 contributes to the L-tyrosine binding site. The short motif at 40–49 (PTAPSLHLGN) is the 'HIGH' region element. Tyrosine 170 and glutamine 174 together coordinate L-tyrosine. The short motif at 231–235 (KFGKT) is the 'KMSKS' region element. Lysine 234 is an ATP binding site. The S4 RNA-binding domain occupies 353–419 (APVVDLFAEV…GKKNLAAVEV (67 aa)).

It belongs to the class-I aminoacyl-tRNA synthetase family. TyrS type 1 subfamily. Homodimer.

The protein localises to the cytoplasm. It catalyses the reaction tRNA(Tyr) + L-tyrosine + ATP = L-tyrosyl-tRNA(Tyr) + AMP + diphosphate + H(+). Functionally, catalyzes the attachment of tyrosine to tRNA(Tyr) in a two-step reaction: tyrosine is first activated by ATP to form Tyr-AMP and then transferred to the acceptor end of tRNA(Tyr). The chain is Tyrosine--tRNA ligase from Streptomyces avermitilis (strain ATCC 31267 / DSM 46492 / JCM 5070 / NBRC 14893 / NCIMB 12804 / NRRL 8165 / MA-4680).